Consider the following 128-residue polypeptide: Holin-like protein CidA (128 aa).

Transmembrane regions (helical) follow at residues 4-24, 26-46, 59-79, and 88-108; these read LLLTVIQIALLFIFARLINWV, ALLHINIPGSIIGIVILFTLL, GAAWLLGELLLFFIPSAVGVI, and FGVSILLVVIISTFVVMVSTG.

The protein belongs to the CidA/LrgA family. CidA subfamily.

The protein localises to the cell membrane. In terms of biological role, increases the activity of extracellular murein hydrolases possibly by mediating their export via hole formation. Inhibited by the antiholin-like proteins LrgAB. In an unstressed cell, the LrgAB products probably inhibit the function of the CidA protein. When a cell is stressed by the addition of antibiotics or by other factors in the environment, CidA possibly oligomerizes within the bacterial cell membrane, creating lesions that disrupt the proton motive force, which in turn results in loss of cell viability. These lesions are also hypothesized to regulate the subsequent cell lysis by either allowing the murein hydrolases access to the cell wall substrate and/or regulating their activity by a possible change in the cell wall pH that results from loss of membrane potential. In Bacillus subtilis (strain 168), this protein is Holin-like protein CidA.